Consider the following 324-residue polypeptide: MKPSVILYKALPDDLLQRLQAHFTVHQVANLSPQTVVQNAAIFAEAEGLLGSNENVDAALLEKMPKLRATSTISVGYDNFDVDALTARKILLMHTPTVLTETVADTLMALVLSTARRVVEVAERVKAGEWTASIGPDWYGTDVHHKTLGIVGMGRIGMALAQRVHFGFNMPILYNARRHHKEAEERFNARYCDLDTLLQESDFVCLILPLTDETHHLFGAEQFAKMKSSAIFINAGRGPVVDENALIAALQKGEIHAAGLDVFEQEPLSVDSPLLSMANVVAVPHIGSATHETRYGMAACAVDNLIDALQGKVEKNCVNPHVAD.

Catalysis depends on residues arginine 237 and glutamate 266. The active-site Proton donor is histidine 285.

Belongs to the D-isomer specific 2-hydroxyacid dehydrogenase family. GhrB subfamily. Homodimer.

It localises to the cytoplasm. The enzyme catalyses glycolate + NADP(+) = glyoxylate + NADPH + H(+). It catalyses the reaction (R)-glycerate + NAD(+) = 3-hydroxypyruvate + NADH + H(+). It carries out the reaction (R)-glycerate + NADP(+) = 3-hydroxypyruvate + NADPH + H(+). In terms of biological role, catalyzes the NADPH-dependent reduction of glyoxylate and hydroxypyruvate into glycolate and glycerate, respectively. In Shigella flexneri, this protein is Glyoxylate/hydroxypyruvate reductase B.